Reading from the N-terminus, the 185-residue chain is Peptidyl-tRNA hydrolase (185 aa).

Y14 serves as a coordination point for tRNA. The active-site Proton acceptor is H19. 3 residues coordinate tRNA: F64, N66, and N112.

The protein belongs to the PTH family. As to quaternary structure, monomer.

It is found in the cytoplasm. The enzyme catalyses an N-acyl-L-alpha-aminoacyl-tRNA + H2O = an N-acyl-L-amino acid + a tRNA + H(+). In terms of biological role, hydrolyzes ribosome-free peptidyl-tRNAs (with 1 or more amino acids incorporated), which drop off the ribosome during protein synthesis, or as a result of ribosome stalling. Catalyzes the release of premature peptidyl moieties from peptidyl-tRNA molecules trapped in stalled 50S ribosomal subunits, and thus maintains levels of free tRNAs and 50S ribosomes. This Latilactobacillus sakei subsp. sakei (strain 23K) (Lactobacillus sakei subsp. sakei) protein is Peptidyl-tRNA hydrolase.